The primary structure comprises 80 residues: MEKLTILLLVAAVLMSTQAQNQEQRQQAKINFLSKRKPSAERWRRDCTSWFGRCTVNSECCSNSCDQTYCELYAFPSFGA.

The first 19 residues, 1–19 (MEKLTILLLVAAVLMSTQA), serve as a signal peptide directing secretion. The propeptide occupies 20–43 (QNQEQRQQAKINFLSKRKPSAERW). Cystine bridges form between Cys-47-Cys-61, Cys-54-Cys-65, and Cys-60-Cys-70. The residue at position 59 (Glu-59) is a 4-carboxyglutamate. Glu-71 carries the post-translational modification 4-carboxyglutamate. Pro-76 carries the post-translational modification 4-hydroxyproline. The propeptide occupies 78–80 (FGA).

Expressed by the venom duct.

The protein localises to the secreted. Its function is as follows. Gamma-conotoxins may act on voltage-gated non-specific cation pacemaker channels (HCN). Triggers depolarization and firing of action potential bursts in the caudodorsal neurons of lymnaea. This effect is due to activation or enhancement of a slow inward cation current that may underlie endogenous bursting activity of these neurons. The sequence is that of Gamma-conotoxin PnVIIA from Conus pennaceus (Feathered cone).